An 840-amino-acid polypeptide reads, in one-letter code: DNA helicase MCM8 (840 aa).

Residues 16–54 (QSWKRGRGGGNFSGKWREREHRPDLSKTTGKRTSEQTPQ) form a disordered region. A compositionally biased stretch (basic and acidic residues) spans 30–40 (KWREREHRPDL). The 208-residue stretch at 402-609 (LFKLIVNSLC…HHDHLLSEHV (208 aa)) folds into the MCM domain. 454-461 (GDPGLGKS) lines the ATP pocket. Ser-630 carries the post-translational modification Phosphoserine.

This sequence belongs to the MCM family. As to quaternary structure, component of the MCM8-MCM9 complex, which forms a hexamer composed of MCM8 and MCM9. Interacts with the DNA mismatch repair (MMR) complex composed at least of MSH2, MSH3, MSH6, PMS1 and MLH1. Interacts with RAD51; the interaction recruits RAD51 to DNA damage sites. Interacts with the MRN complex composed of MRE11, RAD50 and NBN/NBS1. Interacts with CDC6 and ORC2. Interacts with HROB; the interaction recruits the MCM8-MCM9 complex to DNA damage sites. In terms of tissue distribution, highest levels in placenta, lung and pancreas. Low levels in skeletal muscle and kidney. Expressed in various tumors with highest levels in colon and lung cancers.

It is found in the nucleus. The protein localises to the chromosome. It carries out the reaction ATP + H2O = ADP + phosphate + H(+). Its function is as follows. Component of the MCM8-MCM9 complex, a complex involved in the repair of double-stranded DNA breaks (DBSs) and DNA interstrand cross-links (ICLs) by homologous recombination (HR). Required for DNA resection by the MRE11-RAD50-NBN/NBS1 (MRN) complex by recruiting the MRN complex to the repair site and by promoting the complex nuclease activity. Probably by regulating the localization of the MNR complex, indirectly regulates the recruitment of downstream effector RAD51 to DNA damage sites including DBSs and ICLs. The MCM8-MCM9 complex is dispensable for DNA replication and S phase progression. However, may play a non-essential for DNA replication: may be involved in the activation of the prereplicative complex (pre-RC) during G(1) phase by recruiting CDC6 to the origin recognition complex (ORC). Probably by regulating HR, plays a key role during gametogenesis. Stabilizes MCM9 protein. The polypeptide is DNA helicase MCM8 (MCM8) (Homo sapiens (Human)).